The following is a 117-amino-acid chain: NADH-ubiquinone oxidoreductase chain 3 (117 aa).

A run of 3 helical transmembrane segments spans residues 4–24, 60–80, and 86–106; these read IIII…LASI, ITII…MIII, and IMIW…GLYH.

This sequence belongs to the complex I subunit 3 family.

Its subcellular location is the mitochondrion membrane. The catalysed reaction is a ubiquinone + NADH + 5 H(+)(in) = a ubiquinol + NAD(+) + 4 H(+)(out). In terms of biological role, core subunit of the mitochondrial membrane respiratory chain NADH dehydrogenase (Complex I) that is believed to belong to the minimal assembly required for catalysis. Complex I functions in the transfer of electrons from NADH to the respiratory chain. The immediate electron acceptor for the enzyme is believed to be ubiquinone. In Drosophila yakuba (Fruit fly), this protein is NADH-ubiquinone oxidoreductase chain 3 (mt:ND3).